The sequence spans 763 residues: Endoplasmic reticulum membrane sensor NFE2L1 (763 aa).

Residues 7–24 (YLTEGLLQFTILLSLIGV) form a helical; Signal-anchor for type II membrane protein membrane-spanning segment. The segment at 108 to 150 (DPEGSVSGSQPSSGLALESSSGLQDVTGPDNGVRESETEQGFS) is disordered. The segment covering 116–131 (SQPSSGLALESSSGLQ) has biased composition (low complexity). The segment at 180–188 (IFDYSHRQK) is cholesterol recognition/amino acid consensus (CRAC) region. Asparagine 338 and asparagine 350 each carry an N-linked (GlcNAc...) asparagine glycan. Residues 369-373 (SPEVE) form a CPD region. N-linked (GlcNAc...) asparagine glycosylation occurs at asparagine 413. 2 disordered regions span residues 460–523 (EEEF…DSET) and 585–604 (TLKKGSKEKQADFLDKQMSR). Residues 466–470 (DSGLS) carry the Destruction motif motif. The span at 466–514 (DSGLSLDSSHSPSSLSSSEGSSSSSSSSSSSSSSSASSSASSSFSEEGA) shows a compositional bias: low complexity. Serine 519 is subject to Phosphoserine; by CK2. A compositionally biased stretch (basic and acidic residues) spans 589–604 (GSKEKQADFLDKQMSR). Serine 590 bears the Phosphoserine; by PKA mark. Residues 645–708 (LIRDIRRRGK…RQMKQKVQSL (64 aa)) enclose the bZIP domain. The basic motif stretch occupies residues 647-666 (RDIRRRGKNKMAAQNCRKRK). Residues 673 to 687 (LERDVEDLQRDKARL) form a leucine-zipper region. Residues 752-759 (RRQERKPK) carry the Nuclear localization signal motif.

Belongs to the bZIP family. CNC subfamily. As to quaternary structure, interacts with KEAP1. In terms of assembly, interacts (via CPD region) with FBXW7; leading to its ubiquitination and degradation. Interacts with SYVN1/HRD1; leading to its ubiquitination and degradation. Interacts (when ubiquitinated) with DDI2; leading to its cleavage. Interacts (via the bZIP domain) with small MAF protein (MAFF, MAFG or MAFK); required for binding to antioxidant response elements (AREs) on DNA. Interacts (via Destruction motif) with BTRC; leading to its ubiquitination and degradation. Interacts with CEBPB; the heterodimer represses expression of DSPP during odontoblast differentiation. Interacts with MOTS-c, a peptide produced by the mitochondrially encoded 12S rRNA MT-RNR1. In terms of processing, cleaved at Leu-104 by the aspartyl protease DDI2 following retrotranslocation, releasing the protein from the endoplasmic reticulum membrane and forming the transcription factor NRF1 that translocates into the nucleus. Ubiquitination is prerequisite for cleavage by aspartyl protease DDI2. N-glycosylated in normal conditions, when it has a single-pass type II membrane protein topology, with the DNA-binding domain facing the endoplasmic reticulum lumen. Deglycosylated during retrotranslocation to the cytosolic side of the membrane, to have a single-pass type III membrane protein topology with the major part of the protein facing the cytosol. Post-translationally, ubiquitinated by the SCF(FBXW7) complex and SYVN1/HRD1, leading to its degradation by the proteasome. Ubiquitinated during retrotranslocation to the cytosolic side of the membrane: ubiquitination does not lead to degradation and is required for processing by the aspartyl protease DDI2 and subsequent release from the endoplasmic reticulum membrane. In terms of processing, phosphorylation by CK2 at Ser-519 inhibits transcription factor activity, possibly by affecting DNA-binding activity. Phosphorylation at Ser-590 is required for interaction with CEBPB. Ubiquitinated by the SCF(BTRC) complex in the nucleus, leading to its degradation by the proteasome.

The protein localises to the endoplasmic reticulum membrane. It is found in the nucleus. Its function is as follows. Endoplasmic reticulum membrane sensor that translocates into the nucleus in response to various stresses to act as a transcription factor. Constitutes a precursor of the transcription factor NRF1. Able to detect various cellular stresses, such as cholesterol excess, oxidative stress or proteasome inhibition. In response to stress, it is released from the endoplasmic reticulum membrane following cleavage by the protease DDI2 and translocates into the nucleus to form the transcription factor NRF1. Acts as a key sensor of cholesterol excess: in excess cholesterol conditions, the endoplasmic reticulum membrane form of the protein directly binds cholesterol via its CRAC motif, preventing cleavage and release of the transcription factor NRF1, thereby allowing expression of genes promoting cholesterol removal, such as CD36. Involved in proteasome homeostasis: in response to proteasome inhibition, it is released from the endoplasmic reticulum membrane, translocates to the nucleus and activates expression of genes encoding proteasome subunits. CNC-type bZIP family transcription factor that translocates to the nucleus and regulates expression of target genes in response to various stresses. Heterodimerizes with small-Maf proteins (MAFF, MAFG or MAFK) and binds DNA motifs including the antioxidant response elements (AREs), which regulate expression of genes involved in oxidative stress response. Activates or represses expression of target genes, depending on the context. Plays a key role in cholesterol homeostasis by acting as a sensor of cholesterol excess: in low cholesterol conditions, translocates into the nucleus and represses expression of genes involved in defense against cholesterol excess, such as CD36. In excess cholesterol conditions, the endoplasmic reticulum membrane form of the protein directly binds cholesterol via its CRAC motif, preventing cleavage and release of the transcription factor NRF1, thereby allowing expression of genes promoting cholesterol removal. Critical for redox balance in response to oxidative stress: acts by binding the AREs motifs on promoters and mediating activation of oxidative stress response genes, such as GCLC, GCLM, GSS, MT1 and MT2. Plays an essential role during fetal liver hematopoiesis: probably has a protective function against oxidative stress and is involved in lipid homeostasis in the liver. Involved in proteasome homeostasis: in response to proteasome inhibition, mediates the 'bounce-back' of proteasome subunits by translocating into the nucleus and activating expression of genes encoding proteasome subunits. Also involved in regulating glucose flux. Together with CEBPB; represses expression of DSPP during odontoblast differentiation. In response to ascorbic acid induction, activates expression of SP7/Osterix in osteoblasts. The polypeptide is Endoplasmic reticulum membrane sensor NFE2L1 (Bos taurus (Bovine)).